Here is a 477-residue protein sequence, read N- to C-terminus: Probable cytosol aminopeptidase (477 aa).

Mn(2+) contacts are provided by Lys245 and Asp250. Lys257 is an active-site residue. Residues Asp268, Asp327, and Glu329 each contribute to the Mn(2+) site. The active site involves Arg331.

The protein belongs to the peptidase M17 family. Requires Mn(2+) as cofactor.

The protein resides in the cytoplasm. The catalysed reaction is Release of an N-terminal amino acid, Xaa-|-Yaa-, in which Xaa is preferably Leu, but may be other amino acids including Pro although not Arg or Lys, and Yaa may be Pro. Amino acid amides and methyl esters are also readily hydrolyzed, but rates on arylamides are exceedingly low.. The enzyme catalyses Release of an N-terminal amino acid, preferentially leucine, but not glutamic or aspartic acids.. Presumably involved in the processing and regular turnover of intracellular proteins. Catalyzes the removal of unsubstituted N-terminal amino acids from various peptides. In Exiguobacterium sibiricum (strain DSM 17290 / CCUG 55495 / CIP 109462 / JCM 13490 / 255-15), this protein is Probable cytosol aminopeptidase.